We begin with the raw amino-acid sequence, 812 residues long: Probable inorganic carbon transporter subunit DabA (812 aa).

The Zn(2+) site is built by Cys339, Asp341, His501, and Cys516.

This sequence belongs to the inorganic carbon transporter (TC 9.A.2) DabA family. As to quaternary structure, forms a complex with DabB. Zn(2+) is required as a cofactor.

The protein localises to the cell inner membrane. Its function is as follows. Part of an energy-coupled inorganic carbon pump. This is Probable inorganic carbon transporter subunit DabA from Xanthomonas axonopodis pv. citri (strain 306).